The chain runs to 99 residues: Imizoquin biosynthesis cluster protein A (99 aa).

The protein operates within secondary metabolite biosynthesis. Functionally, part of the gene cluster that mediates the biosynthesis of imizoquins A to D, tripeptide-derived alkaloids that serve a protective role against oxidative stress that are essential for normal germination. ImqB is a canonical three-module NRPS that assembles the tripeptide backbone of the imizoquins via condensation of Trp, Tyr, and Leu-derived precursors. N-methylation by imqF and phenol oxidation by imqC, followed by cyclization via the FAD-dependent oxidase imqH carry out the three-step transformation of L-tyrosine into tetrahydroisoquinoline. Importantly, this sequence requires the presence of a free amine in the tyrosine moiety, indicating that isoquinoline formation occurs prior to peptide bond formation. The imidazolidin-4-one ring of imizoquins could form following additional oxidation of the methyl-derived bridgehead carbon by imqH. Lastly, O-methylation by imqG and leucine hydroxylation by imqE complete biosynthesis of the imizoquins. This Aspergillus flavus (strain ATCC 200026 / FGSC A1120 / IAM 13836 / NRRL 3357 / JCM 12722 / SRRC 167) protein is Imizoquin biosynthesis cluster protein A.